We begin with the raw amino-acid sequence, 322 residues long: Follistatin-A (322 aa).

A signal peptide spans 1–32 (MLRMLKRQQLHPGMILLLFWLCYLIEDQKVQA). Residues 33–106 (GNCWLQQGKN…TCDNVDCGPG (74 aa)) enclose the TB domain. 8 cysteine pairs are disulfide-bonded: Cys35–Cys58, Cys45–Cys91, Cys59–Cys94, Cys98–Cys109, Cys103–Cys119, Cys121–Cys153, Cys125–Cys146, and Cys135–Cys167. An N-linked (GlcNAc...) asparagine glycan is attached at Asn75. The 24-residue stretch at 97-120 (TCDNVDCGPGKRCKMNRRSKPRCV) folds into the Follistatin-like 1 domain. Kazal-like domains follow at residues 103–169 (CGPG…KCKK), 189–244 (NAYC…KCIK), and 267–321 (RGRC…SCNC). N-linked (GlcNAc...) asparagine glycosylation occurs at Asn127. Positions 170-193 (TCRDVLCPGSSTCVVDQTNNAYCV) constitute a Follistatin-like 2 domain. Intrachain disulfides connect Cys195/Cys228, Cys199/Cys221, and Cys210/Cys242. The Follistatin-like 3 domain maps to 247–271 (SCDDIHCSAGKKCLWDAKMSRGRCA). Disulfide bonds link Cys273-Cys305, Cys277-Cys298, and Cys287-Cys319. The N-linked (GlcNAc...) asparagine glycan is linked to Asn291.

Monomer. As to expression, not expressed in the organizer region. Expression in gastrulating embryos is confined to anterior and paraxial regions, which give rise to head mesoderm and the first five somites. In addition, expressed transiently in a subset of cells in the posterior notochord anlage. Later, expression is seen in brain, eyes and somites.

Functionally, binds directly to activin and functions as an activin antagonist. Specific inhibitor of the biosynthesis and secretion of pituitary follicle stimulating hormone (fsh). Inhibits bmp-signaling during later stages of development including late phases of dorsoventral patterning, to refine the early pattern set up by the interaction of chordino and bmp2/4. Not involved in organizer function or early phases of dorsoventral pattern formation. The sequence is that of Follistatin-A (fsta) from Danio rerio (Zebrafish).